Reading from the N-terminus, the 121-residue chain is Small ribosomal subunit protein uS13 (121 aa).

The segment at 91-121 (HRRGLPVRGQNSKNNARTRKGPRRTVANKKK) is disordered. The segment covering 106–121 (ARTRKGPRRTVANKKK) has biased composition (basic residues).

The protein belongs to the universal ribosomal protein uS13 family. Part of the 30S ribosomal subunit. Forms a loose heterodimer with protein S19. Forms two bridges to the 50S subunit in the 70S ribosome.

Located at the top of the head of the 30S subunit, it contacts several helices of the 16S rRNA. In the 70S ribosome it contacts the 23S rRNA (bridge B1a) and protein L5 of the 50S subunit (bridge B1b), connecting the 2 subunits; these bridges are implicated in subunit movement. Contacts the tRNAs in the A and P-sites. This Bacillus mycoides (strain KBAB4) (Bacillus weihenstephanensis) protein is Small ribosomal subunit protein uS13.